Here is an 874-residue protein sequence, read N- to C-terminus: Alanine--tRNA ligase (874 aa).

Residues histidine 562, histidine 566, cysteine 664, and histidine 668 each coordinate Zn(2+).

The protein belongs to the class-II aminoacyl-tRNA synthetase family. Requires Zn(2+) as cofactor.

The protein resides in the cytoplasm. It catalyses the reaction tRNA(Ala) + L-alanine + ATP = L-alanyl-tRNA(Ala) + AMP + diphosphate. Catalyzes the attachment of alanine to tRNA(Ala) in a two-step reaction: alanine is first activated by ATP to form Ala-AMP and then transferred to the acceptor end of tRNA(Ala). Also edits incorrectly charged Ser-tRNA(Ala) and Gly-tRNA(Ala) via its editing domain. This chain is Alanine--tRNA ligase, found in Shewanella denitrificans (strain OS217 / ATCC BAA-1090 / DSM 15013).